Reading from the N-terminus, the 188-residue chain is Elongation factor P (188 aa).

Belongs to the elongation factor P family.

It localises to the cytoplasm. It participates in protein biosynthesis; polypeptide chain elongation. Its function is as follows. Involved in peptide bond synthesis. Stimulates efficient translation and peptide-bond synthesis on native or reconstituted 70S ribosomes in vitro. Probably functions indirectly by altering the affinity of the ribosome for aminoacyl-tRNA, thus increasing their reactivity as acceptors for peptidyl transferase. In Azotobacter vinelandii (strain DJ / ATCC BAA-1303), this protein is Elongation factor P.